The sequence spans 299 residues: Ribonuclease Z (299 aa).

Residues histidine 60, histidine 62, aspartate 64, histidine 65, histidine 137, aspartate 207, and histidine 265 each contribute to the Zn(2+) site. The active-site Proton acceptor is aspartate 64.

This sequence belongs to the RNase Z family. Homodimer. Requires Zn(2+) as cofactor.

It carries out the reaction Endonucleolytic cleavage of RNA, removing extra 3' nucleotides from tRNA precursor, generating 3' termini of tRNAs. A 3'-hydroxy group is left at the tRNA terminus and a 5'-phosphoryl group is left at the trailer molecule.. Zinc phosphodiesterase, which displays some tRNA 3'-processing endonuclease activity. Probably involved in tRNA maturation, by removing a 3'-trailer from precursor tRNA. This is Ribonuclease Z from Nitrosopumilus maritimus (strain SCM1).